A 249-amino-acid polypeptide reads, in one-letter code: Type III pantothenate kinase (249 aa).

6 to 13 is a binding site for ATP; the sequence is DCGNSFIK. Substrate is bound by residues tyrosine 93 and 100–103; that span reads GLDR. Aspartate 102 serves as the catalytic Proton acceptor. Aspartate 122 contributes to the K(+) binding site. Threonine 125 provides a ligand contact to ATP. Substrate is bound at residue threonine 181.

The protein belongs to the type III pantothenate kinase family. Homodimer. The cofactor is NH4(+). It depends on K(+) as a cofactor.

Its subcellular location is the cytoplasm. The catalysed reaction is (R)-pantothenate + ATP = (R)-4'-phosphopantothenate + ADP + H(+). It participates in cofactor biosynthesis; coenzyme A biosynthesis; CoA from (R)-pantothenate: step 1/5. Functionally, catalyzes the phosphorylation of pantothenate (Pan), the first step in CoA biosynthesis. The sequence is that of Type III pantothenate kinase from Pseudomonas savastanoi pv. phaseolicola (strain 1448A / Race 6) (Pseudomonas syringae pv. phaseolicola (strain 1448A / Race 6)).